Here is a 204-residue protein sequence, read N- to C-terminus: Imidazole glycerol phosphate synthase subunit HisH 1 (204 aa).

The region spanning Lys5 to Leu204 is the Glutamine amidotransferase type-1 domain. Cys80 serves as the catalytic Nucleophile. Catalysis depends on residues His186 and Glu188.

Heterodimer of HisH and HisF.

Its subcellular location is the cytoplasm. The catalysed reaction is 5-[(5-phospho-1-deoxy-D-ribulos-1-ylimino)methylamino]-1-(5-phospho-beta-D-ribosyl)imidazole-4-carboxamide + L-glutamine = D-erythro-1-(imidazol-4-yl)glycerol 3-phosphate + 5-amino-1-(5-phospho-beta-D-ribosyl)imidazole-4-carboxamide + L-glutamate + H(+). It catalyses the reaction L-glutamine + H2O = L-glutamate + NH4(+). It functions in the pathway amino-acid biosynthesis; L-histidine biosynthesis; L-histidine from 5-phospho-alpha-D-ribose 1-diphosphate: step 5/9. In terms of biological role, IGPS catalyzes the conversion of PRFAR and glutamine to IGP, AICAR and glutamate. The HisH subunit provides the glutamine amidotransferase activity that produces the ammonia necessary to HisF for the synthesis of IGP and AICAR. This Vibrio vulnificus (strain YJ016) protein is Imidazole glycerol phosphate synthase subunit HisH 1 (hisH1).